The primary structure comprises 875 residues: Valine--tRNA ligase (875 aa).

The 'HIGH' region motif lies at 45–55 (PNVTGVLHMGH). The 'KMSKS' region signature appears at 524 to 528 (KMSKS). K527 contacts ATP. Positions 803 to 837 (VKSLIDKTKELIRLEKQLEKYKMLNISVSKKLENE) form a coiled coil.

Belongs to the class-I aminoacyl-tRNA synthetase family. ValS type 1 subfamily. In terms of assembly, monomer.

It is found in the cytoplasm. It carries out the reaction tRNA(Val) + L-valine + ATP = L-valyl-tRNA(Val) + AMP + diphosphate. In terms of biological role, catalyzes the attachment of valine to tRNA(Val). As ValRS can inadvertently accommodate and process structurally similar amino acids such as threonine, to avoid such errors, it has a 'posttransfer' editing activity that hydrolyzes mischarged Thr-tRNA(Val) in a tRNA-dependent manner. The protein is Valine--tRNA ligase of Borreliella burgdorferi (strain ATCC 35210 / DSM 4680 / CIP 102532 / B31) (Borrelia burgdorferi).